The following is a 263-amino-acid chain: Palmitoyltransferase ZDHHC22 (263 aa).

Over 1 to 9 (MLALRLLNV) the chain is Cytoplasmic. A helical membrane pass occupies residues 10 to 30 (VAPAYFLCISLVTFVLQLFLF). At 31–48 (LPSMREDPAAARLFSPAL) the chain is on the lumenal side. Residues 49 to 69 (LHGALFLFLSANALGNYVLVI) form a helical membrane-spanning segment. Topologically, residues 70–125 (QNSPDDLGACQGASARKTPCPSPSTHFCRVCARVTLRHDHHCFFTGNCIGSRNMRN) are cytoplasmic. The region spanning 92–131 (PSTHFCRVCARVTLRHDHHCFFTGNCIGSRNMRNFVLFCL) is the DHHC domain. The active-site S-palmitoyl cysteine intermediate is the Cys111. 2 helical membrane passes run 126–146 (FVLF…AGVA) and 147–167 (YISA…TLLP). The Cytoplasmic segment spans residues 168 to 182 (TSISQFFSGAVLGSE). The chain crosses the membrane as a helical span at residues 183 to 203 (MFVILMLYLWFAIGLACAGFC). Residues 204–263 (CHQLLLILRGQTRHQVRKGVAVRARPWRKNLQEVFGKRWLLGLLVPMFNVGSESSKQQDK) lie on the Lumenal side of the membrane.

It belongs to the DHHC palmitoyltransferase family. As to quaternary structure, interacts with CNN3. In terms of tissue distribution, widely expressed.

It localises to the endoplasmic reticulum membrane. It is found in the golgi apparatus membrane. It catalyses the reaction L-cysteinyl-[protein] + hexadecanoyl-CoA = S-hexadecanoyl-L-cysteinyl-[protein] + CoA. Its function is as follows. Palmitoyltransferase that could catalyze the addition of palmitate onto various protein substrates and be involved in a variety of cellular processes. Catalyzes the palmitoylation of KCNMA1, regulating localization of KCNMA1 to the plasma membrane. Might also mediate palmitoylation of CNN3. The polypeptide is Palmitoyltransferase ZDHHC22 (Homo sapiens (Human)).